The sequence spans 450 residues: NADH-ubiquinone oxidoreductase chain 2 (450 aa).

13 consecutive transmembrane segments (helical) span residues 25–45 (GTIT…IVAM), 58–78 (LTPY…MLLM), 90–110 (SPFY…FPLV), 113–133 (LIAL…LTGL), 145–165 (LLYF…SYFV), 186–206 (AFDY…MAPL), 219–239 (TYIT…WIFA), 248–268 (VTIL…LFQV), 272–292 (TMLA…MMSY), 295–315 (AFYI…LGML), 344–364 (LAFS…TPGF), 385–405 (AIVV…KVLF), and 414–436 (NFIN…SFFM).

Belongs to the complex I subunit 2 family.

The protein localises to the mitochondrion inner membrane. The catalysed reaction is a ubiquinone + NADH + 5 H(+)(in) = a ubiquinol + NAD(+) + 4 H(+)(out). Functionally, core subunit of the mitochondrial membrane respiratory chain NADH dehydrogenase (Complex I) that is believed to belong to the minimal assembly required for catalysis. Complex I functions in the transfer of electrons from NADH to the respiratory chain. The immediate electron acceptor for the enzyme is believed to be ubiquinone. This is NADH-ubiquinone oxidoreductase chain 2 (ND2) from Debaryomyces hansenii (strain ATCC 36239 / CBS 767 / BCRC 21394 / JCM 1990 / NBRC 0083 / IGC 2968) (Yeast).